The following is a 69-amino-acid chain: Cytochrome c oxidase subunit 8A, mitochondrial (69 aa).

The N-terminal 25 residues, 1–25, are a transit peptide targeting the mitochondrion; sequence MSVLTPLLLRGLTGSARRLPVLRAQ. The short motif at 2–19 is the SIFI-degron element; the sequence is SVLTPLLLRGLTGSARRL. Residues 26-36 are Mitochondrial matrix-facing; that stretch reads VHSKPPREKLG. Residues 37 to 60 form a helical membrane-spanning segment; it reads TMDVAIGLTSCFVCFLLPSGWVLS. The Mitochondrial intermembrane portion of the chain corresponds to 61-69; it reads HLETYKKRE.

The protein belongs to the cytochrome c oxidase VIII family. In terms of assembly, component of the cytochrome c oxidase (complex IV, CIV), a multisubunit enzyme composed of 14 subunits. The complex is composed of a catalytic core of 3 subunits MT-CO1, MT-CO2 and MT-CO3, encoded in the mitochondrial DNA, and 11 supernumerary subunits COX4I, COX5A, COX5B, COX6A, COX6B, COX6C, COX7A, COX7B, COX7C, COX8 and NDUFA4, which are encoded in the nuclear genome. The complex exists as a monomer or a dimer and forms supercomplexes (SCs) in the inner mitochondrial membrane with NADH-ubiquinone oxidoreductase (complex I, CI) and ubiquinol-cytochrome c oxidoreductase (cytochrome b-c1 complex, complex III, CIII), resulting in different assemblies (supercomplex SCI(1)III(2)IV(1) and megacomplex MCI(2)III(2)IV(2)). In terms of processing, in response to mitochondrial stress, the precursor protein is ubiquitinated by the SIFI complex in the cytoplasm before mitochondrial import, leading to its degradation. Within the SIFI complex, UBR4 initiates ubiquitin chain that are further elongated or branched by KCMF1.

The protein resides in the mitochondrion inner membrane. It participates in energy metabolism; oxidative phosphorylation. Its function is as follows. Component of the cytochrome c oxidase, the last enzyme in the mitochondrial electron transport chain which drives oxidative phosphorylation. The respiratory chain contains 3 multisubunit complexes succinate dehydrogenase (complex II, CII), ubiquinol-cytochrome c oxidoreductase (cytochrome b-c1 complex, complex III, CIII) and cytochrome c oxidase (complex IV, CIV), that cooperate to transfer electrons derived from NADH and succinate to molecular oxygen, creating an electrochemical gradient over the inner membrane that drives transmembrane transport and the ATP synthase. Cytochrome c oxidase is the component of the respiratory chain that catalyzes the reduction of oxygen to water. Electrons originating from reduced cytochrome c in the intermembrane space (IMS) are transferred via the dinuclear copper A center (CU(A)) of subunit 2 and heme A of subunit 1 to the active site in subunit 1, a binuclear center (BNC) formed by heme A3 and copper B (CU(B)). The BNC reduces molecular oxygen to 2 water molecules using 4 electrons from cytochrome c in the IMS and 4 protons from the mitochondrial matrix. In Eulemur fulvus fulvus (Brown lemur), this protein is Cytochrome c oxidase subunit 8A, mitochondrial (COX8A).